A 311-amino-acid polypeptide reads, in one-letter code: Malate dehydrogenase (311 aa).

Residues 7 to 13 (GAAGGIG) and D34 each bind NAD(+). 2 residues coordinate substrate: R81 and R87. Residues N94 and 117–119 (ITN) each bind NAD(+). N119 and R153 together coordinate substrate. The active-site Proton acceptor is H177. An NAD(+)-binding site is contributed by M227.

Belongs to the LDH/MDH superfamily. MDH type 1 family. In terms of assembly, homodimer.

The catalysed reaction is (S)-malate + NAD(+) = oxaloacetate + NADH + H(+). In terms of biological role, catalyzes the reversible oxidation of malate to oxaloacetate. The sequence is that of Malate dehydrogenase from Shewanella baltica (strain OS223).